Reading from the N-terminus, the 95-residue chain is Protein Vpr (95 aa).

A homooligomerization region spans residues 1–42 (MERAPEDAGPQREPYNEWALELLEELKNEAVRHFPRIWLHGL). A phosphoserine; by host mark is found at Ser-79, Ser-93, and Ser-95.

This sequence belongs to the HIV-1 VPR protein family. As to quaternary structure, homooligomer, may form homodimer. Interacts with p6-gag region of the Pr55 Gag precursor protein through a (Leu-X-X)4 motif near the C-terminus of the P6gag protein. Interacts with host UNG. May interact with host RAD23A/HHR23A. Interacts with host VPRBP/DCAF1, leading to hijack the CUL4A-RBX1-DDB1-DCAF1/VPRBP complex, mediating ubiquitination of host proteins such as TERT and ZGPAT and arrest of the cell cycle in G2 phase. In terms of processing, phosphorylated on several residues by host. These phosphorylations regulate VPR activity for the nuclear import of the HIV-1 pre-integration complex.

It localises to the virion. Its subcellular location is the host nucleus. It is found in the host extracellular space. In terms of biological role, during virus replication, may deplete host UNG protein, and incude G2-M cell cycle arrest. Acts by targeting specific host proteins for degradation by the 26S proteasome, through association with the cellular CUL4A-DDB1 E3 ligase complex by direct interaction with host VPRPB/DCAF-1. Cell cycle arrest reportedly occurs within hours of infection and is not blocked by antiviral agents, suggesting that it is initiated by the VPR carried into the virion. Additionally, VPR induces apoptosis in a cell cycle dependent manner suggesting that these two effects are mechanistically linked. Detected in the serum and cerebrospinal fluid of AIDS patient, VPR may also induce cell death to bystander cells. Its function is as follows. During virus entry, plays a role in the transport of the viral pre-integration (PIC) complex to the host nucleus. This function is crucial for viral infection of non-dividing macrophages. May act directly at the nuclear pore complex, by binding nucleoporins phenylalanine-glycine (FG)-repeat regions. The sequence is that of Protein Vpr from Homo sapiens (Human).